The following is a 143-amino-acid chain: Insertion element IS2 uncharacterized 16.4 kDa protein (143 aa).

The sequence is that of Insertion element IS2 uncharacterized 16.4 kDa protein from Escherichia coli.